A 234-amino-acid chain; its full sequence is GTP-binding protein YPT52 (234 aa).

Residues 10-17 (GDSSVGKS), 66-70 (DTAGQ), and 111-114 (NKVG) each bind GTP. Disordered regions lie at residues 131 to 151 (QETPSTETSPDSNEGGDEEQK) and 206 to 234 (NRQIGGGNNGQVDINLQRPSTNDPTSCCS). Residues 132-142 (ETPSTETSPDS) show a composition bias toward polar residues. Phosphoserine occurs at positions 139 and 142. Lysine 151 is covalently cross-linked (Glycyl lysine isopeptide (Lys-Gly) (interchain with G-Cter in ubiquitin)). Residues 217-234 (VDINLQRPSTNDPTSCCS) show a composition bias toward polar residues. S-geranylgeranyl cysteine attachment occurs at residues cysteine 232 and cysteine 233.

Belongs to the small GTPase superfamily. Rab family. In terms of assembly, interacts with ROY1, YIF1, YIP3, YIP4 and YIP5.

Its subcellular location is the cell membrane. It is found in the endoplasmic reticulum. Functionally, required for transport in the endocytic pathway and for correct sorting of the vacuolar hydrolases suggesting a possible intersection of the endocytic with the vacuolar sorting pathway. May be involved in recruiting the MON1-CCZ1 complex to membranes enriched in phosphatidylinositol 3-phosphate (PtdIns[3]P) or other charged lipids, leading to recruitment of YPT7. In Saccharomyces cerevisiae (strain ATCC 204508 / S288c) (Baker's yeast), this protein is GTP-binding protein YPT52 (YPT52).